Consider the following 229-residue polypeptide: uncharacterized protein (229 aa).

The interval 61 to 229 (MQAEDKVSKP…TESEDKPKRG (169 aa)) is disordered. Over residues 109 to 128 (QQEKQQPEKAVVEQQEKQQP) the composition is skewed to basic and acidic residues. The span at 166–194 (QPEQPERQQQAQPERQQQAQPERQQQAQP) shows a compositional bias: low complexity. Over residues 195–204 (EEAEDAEQEP) the composition is skewed to acidic residues. Basic and acidic residues predominate over residues 218 to 229 (TQTESEDKPKRG).

This is an uncharacterized protein from Frog virus 3 (isolate Goorha) (FV-3).